A 166-amino-acid polypeptide reads, in one-letter code: Small ribosomal subunit protein uS5 (166 aa).

An S5 DRBM domain is found at L11 to V74.

Belongs to the universal ribosomal protein uS5 family. In terms of assembly, part of the 30S ribosomal subunit. Contacts proteins S4 and S8.

With S4 and S12 plays an important role in translational accuracy. In terms of biological role, located at the back of the 30S subunit body where it stabilizes the conformation of the head with respect to the body. This chain is Small ribosomal subunit protein uS5, found in Buchnera aphidicola subsp. Acyrthosiphon kondoi (Acyrthosiphon kondoi symbiotic bacterium).